Here is a 162-residue protein sequence, read N- to C-terminus: Protein S40-4 (162 aa).

Belongs to the senescence regulator S40 family.

The protein localises to the cytoplasm. This Arabidopsis thaliana (Mouse-ear cress) protein is Protein S40-4.